We begin with the raw amino-acid sequence, 400 residues long: Succinate--glutarate CoA-transferase (400 aa).

Residue D181 is the Nucleophile of the active site.

This sequence belongs to the CoA-transferase III family.

The catalysed reaction is glutarate + succinyl-CoA = glutaryl-CoA + succinate. The protein operates within amino-acid degradation. Its pathway is cofactor biosynthesis; biotin biosynthesis. In terms of biological role, is involved in L-lysine degradation and provides glutaryl-CoA for biotin synthesis. Catalyzes the conversion of glutarate to glutaryl-CoA via the transfer of CoA from succinyl-CoA. This chain is Succinate--glutarate CoA-transferase, found in Agrobacterium fabrum (strain C58 / ATCC 33970) (Agrobacterium tumefaciens (strain C58)).